We begin with the raw amino-acid sequence, 264 residues long: Thymidylate synthase (264 aa).

Arg-21 lines the dUMP pocket. His-51 serves as a coordination point for (6R)-5,10-methylene-5,6,7,8-tetrahydrofolate. Residue 126-127 (RR) coordinates dUMP. Cys-146 (nucleophile) is an active-site residue. Residues 166-169 (RSCD), Asn-177, and 207-209 (HLY) each bind dUMP. A (6R)-5,10-methylene-5,6,7,8-tetrahydrofolate-binding site is contributed by Asp-169. A (6R)-5,10-methylene-5,6,7,8-tetrahydrofolate-binding site is contributed by Ala-263.

Belongs to the thymidylate synthase family. Bacterial-type ThyA subfamily. As to quaternary structure, homodimer.

It localises to the cytoplasm. The catalysed reaction is dUMP + (6R)-5,10-methylene-5,6,7,8-tetrahydrofolate = 7,8-dihydrofolate + dTMP. It functions in the pathway pyrimidine metabolism; dTTP biosynthesis. In terms of biological role, catalyzes the reductive methylation of 2'-deoxyuridine-5'-monophosphate (dUMP) to 2'-deoxythymidine-5'-monophosphate (dTMP) while utilizing 5,10-methylenetetrahydrofolate (mTHF) as the methyl donor and reductant in the reaction, yielding dihydrofolate (DHF) as a by-product. This enzymatic reaction provides an intracellular de novo source of dTMP, an essential precursor for DNA biosynthesis. The polypeptide is Thymidylate synthase (Escherichia coli O9:H4 (strain HS)).